Reading from the N-terminus, the 377-residue chain is Ejaculatory bulb-specific protein 1 (377 aa).

The signal sequence occupies residues 1–20; that stretch reads MVRQLILVLSLILFCGSSHA. A disordered region spans residues 155 to 253; the sequence is PIRPGGLFPG…NRPGRPFPGG (99 aa). Positions 165-228 are enriched in pro residues; sequence GPSPGGPSPG…GGSPPSPGGP (64 aa).

In terms of tissue distribution, specifically expressed in the ejaculatory bulb and seminal fluid. Detected in mated females 3 minutes after the start of mating, and for at least 3 hours after the start of mating.

Its subcellular location is the secreted. Its function is as follows. Major protein component of the posterior mating plug. Accessory gland proteins constitute, or are required for formation of the anterior mating plug. Posterior mating plug forms before sperm transfer and the anterior mating plug is formed after the start of mating. The sequence is that of Ejaculatory bulb-specific protein 1 from Drosophila melanogaster (Fruit fly).